The chain runs to 118 residues: Nucleoid-associated protein CTN_1899 (118 aa).

This sequence belongs to the YbaB/EbfC family. As to quaternary structure, homodimer.

Its subcellular location is the cytoplasm. The protein localises to the nucleoid. Functionally, binds to DNA and alters its conformation. May be involved in regulation of gene expression, nucleoid organization and DNA protection. The polypeptide is Nucleoid-associated protein CTN_1899 (Thermotoga neapolitana (strain ATCC 49049 / DSM 4359 / NBRC 107923 / NS-E)).